A 753-amino-acid chain; its full sequence is Striatin-4 (753 aa).

The tract at residues 10–65 is disordered; the sequence is VAAAASSCRPLGSGAGPGPTGAAPVSAPAPGPGPAGKGGGGGGSPGPTAGPEPLSL. Over residues 43-54 the composition is skewed to gly residues; that stretch reads PAGKGGGGGGSP. S53 is modified (phosphoserine). Residues 69 to 136 are a coiled coil; it reads LHFIQHEWAR…QERAKYHKLK (68 aa). Positions 71–79 are caveolin-binding; the sequence is FIQHEWARF. The segment at 165 to 182 is calmodulin-binding; it reads ENSPLVWKEGRQLLRQYL. A Phosphoserine modification is found at S206. Disordered regions lie at residues 213 to 232, 271 to 345, and 363 to 382; these read VEPS…LSGG, CEDE…SPHE, and VDGL…QPRP. 2 stretches are compositionally biased toward acidic residues: residues 271–283 and 302–317; these read CEDE…DELD and EMED…DAIN. Position 276 is a phosphoserine (S276). Basic and acidic residues predominate over residues 332–345; it reads PDPRRCTVDGSPHE. The span at 370-380 shows a compositional bias: pro residues; it reads VTGPPPGTPQP. WD repeat units lie at residues 436–475, 489–528, 542–581, 587–628, 635–674, 677–716, and 723–753; these read SHYD…TAKK, AHRG…MDPY, GHGD…PACL, ASEH…ALLT, SGPT…PVHS, AHLD…CVQE, and KHEE…KVFV.

The protein belongs to the WD repeat striatin family. As to quaternary structure, part of the core of STRIPAK complexes composed of PP2A catalytic and scaffolding subunits, the striatins (PP2A regulatory subunits), the striatin-associated proteins MOB4, STRIP1 and STRIP2, PDCD10 and members of the STE20 kinases, such as STK24 and STK26. Interacts with CTTNBP2NL.

It localises to the cytoplasm. Its function is as follows. Calmodulin-binding scaffolding protein which is the center of the striatin-interacting phosphatase and kinase (STRIPAK) complexes. STRIPAK complexes have critical roles in protein (de)phosphorylation and are regulators of multiple signaling pathways including Hippo, MAPK, nuclear receptor and cytoskeleton remodeling. Different types of STRIPAK complexes are involved in a variety of biological processes such as cell growth, differentiation, apoptosis, metabolism and immune regulation. Key regulator of the expanded Hippo signaling pathway by interacting and allowing the inhibition of MAP4K kinases by the STRIPAK complex. This chain is Striatin-4, found in Homo sapiens (Human).